The primary structure comprises 445 residues: Trigger factor (445 aa).

One can recognise a PPIase FKBP-type domain in the interval Gly162–Thr247.

This sequence belongs to the FKBP-type PPIase family. Tig subfamily.

It localises to the cytoplasm. It carries out the reaction [protein]-peptidylproline (omega=180) = [protein]-peptidylproline (omega=0). Its function is as follows. Involved in protein export. Acts as a chaperone by maintaining the newly synthesized protein in an open conformation. Functions as a peptidyl-prolyl cis-trans isomerase. The sequence is that of Trigger factor from Rickettsia akari (strain Hartford).